The primary structure comprises 277 residues: 2-dehydro-3-deoxyphosphooctonate aldolase (277 aa).

Belongs to the KdsA family.

It is found in the cytoplasm. It catalyses the reaction D-arabinose 5-phosphate + phosphoenolpyruvate + H2O = 3-deoxy-alpha-D-manno-2-octulosonate-8-phosphate + phosphate. It functions in the pathway carbohydrate biosynthesis; 3-deoxy-D-manno-octulosonate biosynthesis; 3-deoxy-D-manno-octulosonate from D-ribulose 5-phosphate: step 2/3. The protein operates within bacterial outer membrane biogenesis; lipopolysaccharide biosynthesis. This chain is 2-dehydro-3-deoxyphosphooctonate aldolase, found in Syntrophotalea carbinolica (strain DSM 2380 / NBRC 103641 / GraBd1) (Pelobacter carbinolicus).